A 150-amino-acid chain; its full sequence is Ribosome maturation factor RimP (150 aa).

The protein belongs to the RimP family.

It localises to the cytoplasm. Functionally, required for maturation of 30S ribosomal subunits. This chain is Ribosome maturation factor RimP, found in Methylococcus capsulatus (strain ATCC 33009 / NCIMB 11132 / Bath).